The following is a 611-amino-acid chain: Chaperone protein DnaK (611 aa).

T173 bears the Phosphothreonine; by autocatalysis mark. A compositionally biased stretch (low complexity) spans 579 to 592; sequence AAGQAEGAQGAQDA. Residues 579–611 form a disordered region; it reads AAGQAEGAQGAQDAGAKKDNVVDAEFEEVKEDK. Over residues 600-611 the composition is skewed to acidic residues; it reads VDAEFEEVKEDK.

This sequence belongs to the heat shock protein 70 family.

Functionally, acts as a chaperone. In Bacillus mycoides (strain KBAB4) (Bacillus weihenstephanensis), this protein is Chaperone protein DnaK.